The chain runs to 348 residues: DnaJ homolog subfamily B member 5 (348 aa).

The J domain maps to 4-68 (DYYKILGIPS…KKRSLYDQYG (65 aa)).

This chain is DnaJ homolog subfamily B member 5 (Dnajb5), found in Mus musculus (Mouse).